The primary structure comprises 399 residues: Glycerol-1-phosphate dehydrogenase [NAD(P)+] (399 aa).

NAD(+) is bound by residues Asp56, Gly118–Asp122, and Thr140–Ser143. Position 145 (Asp145) interacts with substrate. Ser149 is a binding site for NAD(+). Residue Asp192 coordinates substrate. Asp192 and His272 together coordinate Ni(2+). A substrate-binding site is contributed by His276. His292 lines the Ni(2+) pocket.

It belongs to the glycerol-1-phosphate dehydrogenase family. Homodimer. The cofactor is Ni(2+).

It is found in the cytoplasm. The enzyme catalyses sn-glycerol 1-phosphate + NAD(+) = dihydroxyacetone phosphate + NADH + H(+). It carries out the reaction sn-glycerol 1-phosphate + NADP(+) = dihydroxyacetone phosphate + NADPH + H(+). Functionally, catalyzes the NAD(P)H-dependent reduction of dihydroxyacetonephosphate (DHAP or glycerone phosphate) to glycerol 1-phosphate (G1P). The G1P thus generated is probably used for the synthesis of phosphoglycerolipids in Gram-positive bacterial species. The chain is Glycerol-1-phosphate dehydrogenase [NAD(P)+] from Halalkalibacterium halodurans (strain ATCC BAA-125 / DSM 18197 / FERM 7344 / JCM 9153 / C-125) (Bacillus halodurans).